We begin with the raw amino-acid sequence, 341 residues long: Elongation factor Ts (341 aa).

The tract at residues 80–83 is involved in Mg(2+) ion dislocation from EF-Tu; the sequence is TDFV.

The protein belongs to the EF-Ts family.

The protein resides in the cytoplasm. Associates with the EF-Tu.GDP complex and induces the exchange of GDP to GTP. It remains bound to the aminoacyl-tRNA.EF-Tu.GTP complex up to the GTP hydrolysis stage on the ribosome. In Lactobacillus gasseri (strain ATCC 33323 / DSM 20243 / BCRC 14619 / CIP 102991 / JCM 1131 / KCTC 3163 / NCIMB 11718 / NCTC 13722 / AM63), this protein is Elongation factor Ts.